Here is a 338-residue protein sequence, read N- to C-terminus: 1-aminocyclopropane-1-carboxylate deaminase (338 aa).

Lys-51 carries the N6-(pyridoxal phosphate)lysine modification. Catalysis depends on Ser-78, which acts as the Nucleophile.

The protein belongs to the ACC deaminase/D-cysteine desulfhydrase family. Homotrimer. It depends on pyridoxal 5'-phosphate as a cofactor.

It carries out the reaction 1-aminocyclopropane-1-carboxylate + H2O = 2-oxobutanoate + NH4(+). Catalyzes a cyclopropane ring-opening reaction, the irreversible conversion of 1-aminocyclopropane-1-carboxylate (ACC) to ammonia and alpha-ketobutyrate. Allows growth on ACC as a nitrogen source. The sequence is that of 1-aminocyclopropane-1-carboxylate deaminase from Pseudomonas fluorescens.